Reading from the N-terminus, the 75-residue chain is MTEKTIALLENRINDLECQVAFQEQTIEELNDALTQQQLLIAKMQDQMKYVVGKMKNMDSSNMVDPAKEPPPPHY.

Belongs to the SlyX family.

The protein is Protein SlyX homolog of Vibrio vulnificus (strain CMCP6).